The chain runs to 624 residues: Probable Xaa-Pro aminopeptidase P (624 aa).

4 residues coordinate Mn(2+): aspartate 421, aspartate 432, glutamate 530, and glutamate 544.

Belongs to the peptidase M24B family. It depends on Mn(2+) as a cofactor.

It carries out the reaction Release of any N-terminal amino acid, including proline, that is linked to proline, even from a dipeptide or tripeptide.. Its function is as follows. Catalyzes the removal of a penultimate prolyl residue from the N-termini of peptides. This chain is Probable Xaa-Pro aminopeptidase P (AMPP), found in Arthroderma otae (strain ATCC MYA-4605 / CBS 113480) (Microsporum canis).